We begin with the raw amino-acid sequence, 303 residues long: Holdfast attachment protein D (303 aa).

The span at 266–281 (SARSTMSGPKSCSTTF) shows a compositional bias: polar residues. Residues 266–303 (SARSTMSGPKSCSTTFRPIRAAASRRPPASAGTRAMTR) form a disordered region. Residues 282-303 (RPIRAAASRRPPASAGTRAMTR) are compositionally biased toward low complexity.

Its subcellular location is the cell outer membrane. Functionally, involved in attachment of the holdfast to the cell. The holdfast is a structure that allows the bacteria to firmly adhere to surfaces. This Caulobacter vibrioides (strain ATCC 19089 / CIP 103742 / CB 15) (Caulobacter crescentus) protein is Holdfast attachment protein D (hfaD).